The sequence spans 117 residues: Small ribosomal subunit protein uS19c (117 aa).

Belongs to the universal ribosomal protein uS19 family.

The protein resides in the plastid. Functionally, protein S19 forms a complex with S13 that binds strongly to the 16S ribosomal RNA. The protein is Small ribosomal subunit protein uS19c (rps19) of Helicosporidium sp. subsp. Simulium jonesii (Green alga).